A 257-amino-acid polypeptide reads, in one-letter code: Pyrroline-5-carboxylate reductase (257 aa).

Belongs to the pyrroline-5-carboxylate reductase family.

It is found in the cytoplasm. It catalyses the reaction L-proline + NADP(+) = (S)-1-pyrroline-5-carboxylate + NADPH + 2 H(+). It carries out the reaction L-proline + NAD(+) = (S)-1-pyrroline-5-carboxylate + NADH + 2 H(+). The protein operates within amino-acid biosynthesis; L-proline biosynthesis; L-proline from L-glutamate 5-semialdehyde: step 1/1. Its function is as follows. Catalyzes the reduction of 1-pyrroline-5-carboxylate (PCA) to L-proline. This is Pyrroline-5-carboxylate reductase from Helicobacter pylori (strain J99 / ATCC 700824) (Campylobacter pylori J99).